The sequence spans 712 residues: MKVHCLSQSAQSPCFLLEYKNVKILLDCALEISSILHFLPKNLNYNNNNNNNNNNNNNNNNNNNNNNNNNSYSFKEKDKELNQFFKNINGTLYIDNGCSNIKYNCPQFEMIDDFSTIDMILISNYTNIYALPFITEYTNFQGKIYATEPTVQIGKLLLEELVQMDKQYSNSSINNNNNNNNLSDCWQNIEILEKLNVHNVGMENENLYRDSYRWKDLYKKIDIEKSFEKIQSIRFNESIKHYGFECIPSSSGYGLGSANWVIESKGFERVVYISDSSLSLSRYPTPFQLSPIDNPDVLILSKINHYPNNPPDQMLSELCSNIGSTLQQGGTVLIPSYSCGIILDLFEHLADYLNKVGLPYVPIYFVSSVSKAVLSYADIYSEWLNKSKQERAFMPETPFLHQDLMRKGQFQAYQHVHSNFQANDPCIIFTGHPSCRIGDITTLIKLYDNPKNSILLIEPDFDFKSTVLPFSKQISRIQFLPIDPRINFNEANLLISKLSPKHLIIPRIYKNYVKNKHSNGNFGIVTTILPLDTIKIQNNQNFESGFIDKELAQTIQTKVLDKSSQLKNNTTTTTTTTINNQQPIHVAEISGVLSMSDHELIISPPNISDSNKIIHIKEKFIWGTLSIENIIKAINSTKQFKNNGDSIEYFEINENYYLIKISSKNKTNNNNNSDQVTNIHLSPQNVNIETSCETTRRLISDIVLLNCNGFYV.

Residues 47–70 (NNNNNNNNNNNNNNNNNNNNNNNN) are compositionally biased toward low complexity. A disordered region spans residues 47 to 73 (NNNNNNNNNNNNNNNNNNNNNNNNSYS).

Belongs to the metallo-beta-lactamase superfamily. RNA-metabolizing metallo-beta-lactamase-like family. INTS9 subfamily. Component of the Integrator complex. The core complex associates with protein phosphatase 2A subunits, to form the Integrator-PP2A (INTAC) complex.

It localises to the nucleus. It is found in the cytoplasm. Component of the integrator complex, a multiprotein complex that terminates RNA polymerase II (Pol II) transcription in the promoter-proximal region of genes. The integrator complex provides a quality checkpoint during transcription elongation by driving premature transcription termination of transcripts that are unfavorably configured for transcriptional elongation: the complex terminates transcription by (1) catalyzing dephosphorylation of the C-terminal domain (CTD) of Pol II subunit polr2a, (2) degrading the exiting nascent RNA transcript via endonuclease activity and (3) promoting the release of Pol II from bound DNA. The integrator complex is also involved in terminating the synthesis of non-coding Pol II transcripts, such as enhancer RNAs (eRNAs), small nuclear RNAs (snRNAs), telomerase RNAs and long non-coding RNAs (lncRNAs). This chain is Integrator complex subunit 9 homolog (ints9), found in Dictyostelium discoideum (Social amoeba).